The chain runs to 197 residues: HTH-type transcriptional regulator BetI (197 aa).

In terms of domain architecture, HTH tetR-type spans 8–68 (PIRRSQLIHA…ATMRHLLSAL (61 aa)). Positions 31-50 (SIALIARLAGVSNGIISHYF) form a DNA-binding region, H-T-H motif.

The protein operates within amine and polyamine biosynthesis; betaine biosynthesis via choline pathway [regulation]. In terms of biological role, repressor involved in the biosynthesis of the osmoprotectant glycine betaine. It represses transcription of the choline transporter BetT and the genes of BetAB involved in the synthesis of glycine betaine. In Pseudomonas aeruginosa (strain LESB58), this protein is HTH-type transcriptional regulator BetI.